The sequence spans 228 residues: uncharacterized protein (228 aa).

Residues 1 to 16 form the signal peptide; the sequence is MILLLLALISATTAFQ. A helical transmembrane segment spans residues 206 to 225; sequence LFQTLFFVTLSFLVGSAFAL.

It to A.fulgidus AF_1225.

It localises to the membrane. This is an uncharacterized protein from Archaeoglobus fulgidus (strain ATCC 49558 / DSM 4304 / JCM 9628 / NBRC 100126 / VC-16).